The following is a 111-amino-acid chain: Large ribosomal subunit protein uL24 (111 aa).

The protein belongs to the universal ribosomal protein uL24 family. In terms of assembly, part of the 50S ribosomal subunit.

Its function is as follows. One of two assembly initiator proteins, it binds directly to the 5'-end of the 23S rRNA, where it nucleates assembly of the 50S subunit. Functionally, one of the proteins that surrounds the polypeptide exit tunnel on the outside of the subunit. The polypeptide is Large ribosomal subunit protein uL24 (Chlamydia trachomatis serovar A (strain ATCC VR-571B / DSM 19440 / HAR-13)).